Reading from the N-terminus, the 356-residue chain is Stomatin-like protein 2, mitochondrial (356 aa).

The transit peptide at 1-28 directs the protein to the mitochondrion; that stretch reads MLARAARGTGALLLKGSVQASARAPRRA. The residue at position 17 (S17) is a Phosphoserine; by PKC/PRKCZ. A Phosphotyrosine modification is found at Y124. Position 145 is an N6-acetyllysine; alternate (K145). N6-succinyllysine; alternate is present on K145. Residues 215–252 adopt a coiled-coil conformation; it reads INVAEGKKQAQILASEAEKAEQINQAAGEASAVLAKAK. K233 carries the N6-acetyllysine modification. The disordered stretch occupies residues 326-356; that stretch reads EAQDSVSSRSSRDVRSTDASLDEELDRVKLS. S330 bears the Phosphoserine mark.

It belongs to the band 7/mec-2 family. As to quaternary structure, forms homooligomers. Interacts with MFN2; may form heterooligomers with this mediator of mitochondrial fusion. Interacts with PHB1 and PHB2; stabilizes and recruits them to cardiolipin-enriched mitochondrial membranes. Interacts with CACNA2D2.

Its subcellular location is the cell membrane. The protein localises to the mitochondrion. It localises to the mitochondrion inner membrane. The protein resides in the mitochondrion intermembrane space. It is found in the membrane raft. Its subcellular location is the cytoplasm. The protein localises to the cytoskeleton. Functionally, mitochondrial protein that probably regulates the biogenesis and the activity of mitochondria. Stimulates cardiolipin biosynthesis, binds cardiolipin-enriched membranes where it recruits and stabilizes some proteins including prohibitin and may therefore act in the organization of functional microdomains in mitochondrial membranes. Through regulation of the mitochondrial function may play a role into several biological processes including cell migration, cell proliferation, T-cell activation, calcium homeostasis and cellular response to stress. May play a role in calcium homeostasis through negative regulation of calcium efflux from mitochondria. Required for mitochondrial hyperfusion a pro-survival cellular response to stress which results in increased ATP production by mitochondria. May also regulate the organization of functional domains at the plasma membrane and play a role in T-cell activation through association with the T-cell receptor signaling complex and its regulation. The protein is Stomatin-like protein 2, mitochondrial (STOML2) of Bos taurus (Bovine).